A 1848-amino-acid polypeptide reads, in one-letter code: Unconventional myosin-Vb (1848 aa).

M1 carries the N-acetylmethionine modification. The Myosin N-terminal SH3-like domain maps to S8–P60. Residues V21–L40 form a requires for interaction with LIMA1 region. A Myosin motor domain is found at V69–A761. G163–T170 contributes to the ATP binding site. The tract at residues K596–K630 is disordered. The interval L640–D662 is actin-binding. 6 IQ domains span residues I769 to C798, L792 to K821, V817 to A848, V840 to K869, T865 to M896, and I888 to K917. 2 coiled-coil regions span residues A899–T1266 and R1341–E1471. Disordered stretches follow at residues Q1093–D1123 and Q1166–N1192. The segment covering P1101–I1121 has biased composition (polar residues). Over residues Q1166–Q1179 the composition is skewed to basic and acidic residues. The residue at position 1446 (S1446) is a Phosphoserine. One can recognise a Dilute domain in the interval T1526–E1803.

The protein belongs to the TRAFAC class myosin-kinesin ATPase superfamily. Myosin family. In terms of assembly, component of the CART complex, at least composed of ACTN4, HGS/HRS, MYO5B and TRIM3. Interacts with RAB11FIP2, RAB11A, and RAB8A. Found in a complex with CFTR and RAB11A. Interacts with NPC1L1;. Interacts with LIMA1.

It is found in the cytoplasm. May be involved in vesicular trafficking via its association with the CART complex. The CART complex is necessary for efficient transferrin receptor recycling but not for EGFR degradation. Required in a complex with RAB11A and RAB11FIP2 for the transport of NPC1L1 to the plasma membrane. Together with RAB11A participates in CFTR trafficking to the plasma membrane and TF (transferrin) recycling in nonpolarized cells. Together with RAB11A and RAB8A participates in epithelial cell polarization. Together with RAB25 regulates transcytosis. Required for proper localization of bile salt export pump ABCB11 at the apical/canalicular plasma membrane of hepatocytes. The chain is Unconventional myosin-Vb (MYO5B) from Homo sapiens (Human).